The chain runs to 232 residues: Pseudaminic acid cytidylyltransferase (232 aa).

It belongs to the CMP-NeuNAc synthase family. The cofactor is Mg(2+).

It carries out the reaction pseudaminate + CTP = CMP-pseudaminate + diphosphate. In terms of biological role, catalyzes the final step in the biosynthesis of pseudaminic acid, a sialic-acid-like sugar that is used to modify flagellin. Mediates the activation of pseudaminic acid with CMP by forming CMP-pseudaminic acid. This chain is Pseudaminic acid cytidylyltransferase (pseF), found in Campylobacter jejuni subsp. jejuni serotype O:23/36 (strain 81-176).